The chain runs to 415 residues: Casein kinase 1-like protein 3 (415 aa).

The region spanning 9-277 is the Protein kinase domain; sequence YKLGRKIGGG…FLKRLFRDLF (269 aa). Residues 15-23 and Lys-38 contribute to the ATP site; that span reads IGGGSFGEI. The active-site Proton acceptor is the Asp-128. Polar residues-rich tracts occupy residues 303–314 and 373–415; these read NQSQAVPGSSNP and NMPS…SPEK. 2 disordered regions span residues 303-330 and 344-415; these read NQSQ…GPNI and NAIG…SPEK.

Belongs to the protein kinase superfamily. CK1 Ser/Thr protein kinase family. Casein kinase I subfamily. Slightly autophosphorylated. In terms of tissue distribution, expressed in seedlings, stems, leaves and flowers.

Its subcellular location is the cytoplasm. It is found in the nucleus. The catalysed reaction is L-seryl-[protein] + ATP = O-phospho-L-seryl-[protein] + ADP + H(+). It catalyses the reaction L-threonyl-[protein] + ATP = O-phospho-L-threonyl-[protein] + ADP + H(+). Functionally, protein kinase involved in blue light responses (e.g. hypocotyl elongation and flowering) by phosphorylating CRY2 to reduce its stability. The polypeptide is Casein kinase 1-like protein 3 (Arabidopsis thaliana (Mouse-ear cress)).